A 408-amino-acid polypeptide reads, in one-letter code: Hepatocyte nuclear factor 4-gamma (408 aa).

Positions 9-84 (NCLCAICGDR…AGMKKEAVQN (76 aa)) form a DNA-binding region, nuclear receptor. 2 consecutive NR C4-type zinc fingers follow at residues 12 to 32 (CAICGDRATGKHYGASSCDGC) and 48 to 72 (CRFSRQCVVDKDKRNQCRYCRLRKC). Phosphoserine is present on S94. The region spanning 99–328 (SNIPSINTLA…NLLQEMLLGG (230 aa)) is the NR LBD domain. Residues 368–390 (ISTPETPLPSPPQGSGQEQYKIA) are disordered. Residues T370 and T373 each carry the phosphothreonine modification. S377 carries the phosphoserine modification.

This sequence belongs to the nuclear hormone receptor family. NR2 subfamily. In terms of tissue distribution, expressed in pancreas, kidney, small intestine and testis. Weakly expressed in colon. Not expressed in liver, skeletal muscle, lung, placenta, brain, heart, peripheral blood, ovary, prostate, thymus and spleen.

It is found in the nucleus. Functionally, transcription factor. Has a lower transcription activation potential than HNF4-alpha. In Homo sapiens (Human), this protein is Hepatocyte nuclear factor 4-gamma (HNF4G).